Reading from the N-terminus, the 465-residue chain is Hexokinase-4 (465 aa).

The Hexokinase domain maps to 10 to 454; sequence ATKKEKVEQI…SGRGAALVSA (445 aa). Positions 67 to 203 are hexokinase small subdomain; the sequence is EGSEVGDFLS…DFEMDVVAMV (137 aa). 78 to 83 lines the ATP pocket; sequence DLGGTN. Substrate-binding positions include 151–152, 168–169, and 204–205; these read SF, TK, and ND. The hexokinase large subdomain stretch occupies residues 204 to 443; that stretch reads NDTVATMISC…CEITFIESEE (240 aa). Thr-228 lines the ATP pocket. Substrate-binding residues include Asn-231, Glu-256, and Glu-290. ATP-binding positions include 295–296, 332–336, and 411–415; these read GK, TRFVS, and SVYKL.

The protein belongs to the hexokinase family. In terms of assembly, monomer. Interacts with MIDN; the interaction occurs preferentially at low glucose levels and results in inhibition of hexokinase activity. Interacts with GCKR; leading to sequestration in the nucleus.

Its subcellular location is the cytoplasm. The protein resides in the nucleus. It localises to the mitochondrion. It catalyses the reaction a D-hexose + ATP = a D-hexose 6-phosphate + ADP + H(+). It carries out the reaction D-fructose + ATP = D-fructose 6-phosphate + ADP + H(+). The catalysed reaction is D-glucose + ATP = D-glucose 6-phosphate + ADP + H(+). The enzyme catalyses D-mannose + ATP = D-mannose 6-phosphate + ADP + H(+). It functions in the pathway carbohydrate metabolism; hexose metabolism. Its pathway is carbohydrate degradation; glycolysis; D-glyceraldehyde 3-phosphate and glycerone phosphate from D-glucose: step 1/4. With respect to regulation, subject to allosteric regulation. Low glucose and high fructose-6-phosphate triggers association with the inhibitor GCKR followed by sequestration in the nucleus. Its function is as follows. Catalyzes the phosphorylation of hexose, such as D-glucose, D-fructose and D-mannose, to hexose 6-phosphate (D-glucose 6-phosphate, D-fructose 6-phosphate and D-mannose 6-phosphate, respectively). Compared to other hexokinases, has a weak affinity for D-glucose, and is effective only when glucose is abundant. Mainly expressed in pancreatic beta cells and the liver and constitutes a rate-limiting step in glucose metabolism in these tissues. Since insulin secretion parallels glucose metabolism and the low glucose affinity of GCK ensures that it can change its enzymatic activity within the physiological range of glucose concentrations, GCK acts as a glucose sensor in the pancreatic beta cell. In pancreas, plays an important role in modulating insulin secretion. In liver, helps to facilitate the uptake and conversion of glucose by acting as an insulin-sensitive determinant of hepatic glucose usage. Required to provide D-glucose 6-phosphate for the synthesis of glycogen. Mediates the initial step of glycolysis by catalyzing phosphorylation of D-glucose to D-glucose 6-phosphate. The protein is Hexokinase-4 of Mus musculus (Mouse).